We begin with the raw amino-acid sequence, 112 residues long: Small ribosomal subunit protein eS24 (112 aa).

The tract at residues 88–112 (RGMAGEEEGNADAQDAPSGDAAEAS) is disordered.

It belongs to the eukaryotic ribosomal protein eS24 family.

The chain is Small ribosomal subunit protein eS24 from Methanospirillum hungatei JF-1 (strain ATCC 27890 / DSM 864 / NBRC 100397 / JF-1).